We begin with the raw amino-acid sequence, 2060 residues long: MDSFFPEGARVWLRENGQHFPSTVNSCAEGVVVFQTDYGQVFTYKQSTITNQKVTAMHPLHEEGVDDMASLTELHGGSIMYNLFQRYKRNQIYTYIGSIIASVNPYQPIAGLYERATMEQYSRCHLGELPPHIFAIANECYRCLWKRHDNQCVLISGESGAGKTESTKLILKFLSVISQHSLDLCLQEKSSSVEQAILQSSPIMEAFGNAKTVYNNNSSRFGKFVQLNICQKGNIQGGRIVDYLLEKNRVVRQNPGERNYHIFYALLAGLDQGEREEFYLSLPENYHYLNQSGCTEDKTISDQESFRQVIEAMEVMQFSKEEVREVLRLLAGILHLGNIEFITAGGAQISFKTALGRSAELLGLDPTQLTDALTQRSMFLRGEEILTPLSVQQAVDSRDSLAMALYARCFEWVIKKINSRIKGKDDFKSIGILDIFGFENFEVNHFEQFNINYANEKLQEYFNKHIFSLEQLEYSREGLVWEDIDWIDNGECLDLIEKKLGLLALINEESHFPQATDSTLLEKLHNQHANNHFYVKPRVAVNNFGVKHYAGEVQYDVRGILEKNRDTFRDDLLNLLRESRFDFIYDLFEHISSRNNQDTLKCGSKHRRPTVSSQFKDSLHSLMATLSSSNPFFVRCIKPNTQKMPDQFDQAVVLNQLRYSGMLETVRIRKAGYAVRRPFQDFYKRYKVLMRDLALPEDIRGKCTVLLQFYDASNSEWQLGKTKVFLRESLEQKLEKRREEEIDRAAMVIRAHILGYLARKQYRKVLCGVVTIQKNYRAFLARKRFLHLKKAAIVFQKQLRGRLARKVYRQLLAEKRELEERKRLEEEKKREEEERERKRAQREADLLRAQQEAETRKQQELEALQKNQREADLTRELEKQRENKQVEEILRLEKEIEDLQRMKEQQELSLTEASLQKLQQLRDEELRRLEDEACRAAQEFLESLNFDEIDECVRNIERSLSVGSEISGELSELAENASGEKPNFNFSQPYPEEEVDEGFEADDDAFKDSPNPSEHGHSDQRTSGIRTSDDSSEEDPYMNYTVVPTSPSADSTVLLAASVQDSASLHNSSSGESTYCMPQNNGDLPSPDGDYDYDQDDYEDGAITSGSSVTFSNSYGSQWSPDYRYSVGTYNSSGAYRFSSEGAQSSFEDSEEDFDSRFDTDDELSYRRDSVYSCVTLPYFHSFLYMKGGLMNSWKRRWCVLKDETFLWFRSKQEALKQGWLHKKGGGSSTLSRRNWKKRWFVLRQSKLMYFENDSEEKLKGTVEVRSAKEIIDNTNKENGIDIIMADRTFHLIAESPEDASQWFSVLSQVHSSTDQEIREMHDEQANPQNAVGTLDVGLIDSVCASDSPDRPNSFVIITANRVLHCNADTPEEMHHWITLLQRSKGDTRVEGQEFIVRGWLHKEVKNSPKMSSLKLKKRWFVLTHNSLDYYKSSEKNALKLGTLVLNSLCSVVPPDEKIFKETGYWNVTVYGRKHCYRLYTKLLNEATRWSSAIQNVTDTKAPIDTPTQQLIQDIKENCLNSDVVEQIYKRNPILRYTHHPLHSPLLPLPYGDINLNLLKDKGYTTLQDEAIKIFNSLQQLESMSDPIPIIQGILQTGHDLRPLRDELYCQLIKQTNKVPHPGSVGNLYSWQILTCLSCTFLPSRGILKYLKFHLKRIREQFPGTEMEKYALFIYESLKKTKCREFVPSRDEIEALIHRQEMTSTVYCHGGGSCKITINSHTTAGEVVEKLIRGLAMEDSRNMFALFEYNGQVDKAIESRTIVADVLAKFEKLAATSEAGDAPWKFYFKLYCFLDTDSMPKDSVEFAFMFEQAHEAVIHGHHPAPEESLQVLAALRLQYLQGDYTLHTSVPPLEEVYSLQRLKARISQSTKTFTPYERLEKRRTSFLEGTLRRSFRTGTVARQKVEEEQMLDMWIKEEICSARASIIDKWKKLQGVSQEQAMAKYMALIKEWPGYGSTLFDVECKEGGFPQELWLGVSADAVSVYKRGEGKPLEVFQYEHILSFGAPLANTYKIVVDERELLFETSEVVDVAKLMKAYISMIVKKRYSTTRSLSSQGSSR.

Methionine 1 is modified (N-acetylmethionine). The region spanning glutamate 63 to glutamate 739 is the Myosin motor domain. ATP contacts are provided by residues asparagine 104, tyrosine 113, glycine 160–glutamate 165, and asparagine 215. The actin-binding stretch occupies residues leucine 619 to threonine 641. IQ domains follow at residues isoleucine 742–threonine 771, valine 765–valine 794, and leucine 788–glutamate 817. The SAH stretch occupies residues glutamate 814–glutamate 882. Residues asparagine 883–alanine 933 adopt a coiled-coil conformation. A phosphoserine mark is found at serine 961, serine 964, and serine 967. Disordered stretches follow at residues serine 971–asparagine 1039 and serine 1064–aspartate 1088. A compositionally biased stretch (acidic residues) spans proline 991–alanine 1005. A compositionally biased stretch (polar residues) spans serine 1064 to aspartate 1083. Threonine 1160 carries the post-translational modification Phosphothreonine. 2 PH domains span residues glutamate 1214–serine 1312 and glutamate 1394–aspartate 1499. The MyTH4 domain maps to leucine 1549–isoleucine 1697. An FERM domain is found at methionine 1702 to arginine 2046.

This sequence belongs to the TRAFAC class myosin-kinesin ATPase superfamily. Myosin family. As to quaternary structure, monomer, when in an inactive conformation in the cytosol. Homodimer in its active, membrane-bound conformation; antiparallel coiled coil-mediated dimer formation. Interacts with ECPAS. Interacts with DCC and ITGB5; the presence of DCC inhibits ITGB5 binding. Interacts with tubulin; ITGB5 or DCC binding inhibits tubulin binding. Interacts strongly with CALM3 and weakly with CALM, the CALM3 interaction is essential for function in filopodial extension and motility. Interacts with ITGB1, ITGB3 and ITGB5. Interacts with NEO1. Interacts with VASP.

The protein resides in the cytoplasm. It is found in the cytosol. The protein localises to the cell projection. Its subcellular location is the lamellipodium. It localises to the ruffle. The protein resides in the cytoskeleton. It is found in the filopodium tip. The protein localises to the cell cortex. Its subcellular location is the filopodium membrane. It localises to the cell membrane. Its function is as follows. Myosins are actin-based motor molecules with ATPase activity. Unconventional myosins serve in intracellular movements. MYO10 binds to actin filaments and actin bundles and functions as a plus end-directed motor. Moves with higher velocity and takes larger steps on actin bundles than on single actin filaments. The tail domain binds to membranous compartments containing phosphatidylinositol 3,4,5-trisphosphate or integrins, and mediates cargo transport along actin filaments. Regulates cell shape, cell spreading and cell adhesion. Stimulates the formation and elongation of filopodia. In hippocampal neurons it induces the formation of dendritic filopodia by trafficking the actin-remodeling protein VASP to the tips of filopodia, where it promotes actin elongation. Plays a role in formation of the podosome belt in osteoclasts. In Rattus norvegicus (Rat), this protein is Unconventional myosin-X (Myo10).